Consider the following 870-residue polypeptide: Radial spoke head 10 homolog B (870 aa).

Residues Met-1 to Ala-16 show a composition bias toward basic and acidic residues. Positions Met-1–Ala-43 are disordered. A compositionally biased stretch (polar residues) spans Arg-17–Glu-39. 10 MORN repeats span residues Tyr-86–Thr-108, Tyr-109–Lys-131, Tyr-132–Met-154, Tyr-155–Val-177, Tyr-179–Thr-201, Tyr-204–Ile-226, Tyr-227–Glu-249, Tyr-251–Ile-273, Tyr-284–Met-306, and Tyr-307–Val-329. The segment at Asn-674–Pro-704 is disordered. Basic and acidic residues predominate over residues His-683–Ser-692. Positions Ala-693 to Ser-703 are enriched in low complexity. The stretch at Lys-784–Arg-811 forms a coiled coil. Residues Val-840 to Lys-870 are disordered.

As to quaternary structure, interacts with RSPH6A. Does not appear to be part of the axonemal radial spoke complexes 1 or 2.

It is found in the cytoplasm. The protein localises to the cytoskeleton. Its subcellular location is the cilium axoneme. It localises to the cell projection. The protein resides in the cilium. It is found in the flagellum. May function as part of the axonemal radial spoke complex 3 (RS3). Radial spoke complexes are important for ciliary motility. This is Radial spoke head 10 homolog B (RSPH10B) from Homo sapiens (Human).